The sequence spans 889 residues: Oxysterol-binding protein-related protein 8 (889 aa).

M1 carries the post-translational modification N-acetylmethionine. A disordered region spans residues 1–129 (MEGGLADGEP…SLKVQKKNYR (129 aa)). S14 bears the Phosphoserine mark. Composition is skewed to polar residues over residues 28-46 (VVANSDESQLLTPGKMSQR) and 62-71 (PSLSPASPHS). Residues S65 and S68 each carry the phosphoserine modification. Basic and acidic residues-rich tracts occupy residues 73-88 (GFERGKEDISQNKDES), 95-109 (SKSESKLYNGSEKDS), and 116-129 (TKKESLKVQKKNYR). Residues 148-265 (VIVMADWLKI…WMDALELALK (118 aa)) form the PH domain. Phosphoserine occurs at positions 314, 328, and 342. The span at 322 to 336 (KDQDMYSDKSDKEND) shows a compositional bias: basic and acidic residues. A disordered region spans residues 322 to 399 (KDQDMYSDKS…AGEASQTETV (78 aa)). Residues 346-363 (VMGKSEESDTDTSERQDD) are compositionally biased toward basic and acidic residues. A 1,2-diacyl-sn-glycero-3-phospho-(1D-myo-inositol 4-phosphate) is bound by residues 420–425 (LSKVVL), 482–485 (KPYN), and 514–515 (HH). A 1,2-diacyl-sn-glycero-3-phospho-L-serine is bound by residues 420–425 (LSKVVL) and N485. S540 contacts a 1,2-diacyl-sn-glycero-3-phospho-L-serine. Residues K706, E710, and R714 each contribute to the a 1,2-diacyl-sn-glycero-3-phospho-(1D-myo-inositol 4-phosphate) site. Residues 771–823 (KHRTPMVSVPKMKHKPTRQQKKVAKGYSSPEPDIQDSSGSEAQSVKPSTRRKK) are disordered. A compositionally biased stretch (basic residues) spans 781-794 (KMKHKPTRQQKKVA). Residues 805-817 (QDSSGSEAQSVKP) are compositionally biased toward polar residues. Phosphoserine occurs at positions 807, 808, 810, and 814. A helical transmembrane segment spans residues 871–888 (YFIIFLLILLQVIINFMF).

Belongs to the OSBP family. In terms of assembly, interacts with SPAG5. Interacts with NUP62. In terms of tissue distribution, widely expressed. Expressed at higher level in macrophages.

It is found in the endoplasmic reticulum membrane. Its subcellular location is the nucleus membrane. Functionally, lipid transporter involved in lipid countertransport between the endoplasmic reticulum and the plasma membrane: specifically exchanges phosphatidylserine with phosphatidylinositol 4-phosphate (PI4P), delivering phosphatidylserine to the plasma membrane in exchange for PI4P, which is degraded by the SAC1/SACM1L phosphatase in the endoplasmic reticulum. Binds phosphatidylserine and PI4P in a mutually exclusive manner. Binds oxysterol, 25-hydroxycholesterol and cholesterol. This chain is Oxysterol-binding protein-related protein 8 (OSBPL8), found in Homo sapiens (Human).